The primary structure comprises 393 residues: Carbamoyl phosphate synthase small chain (393 aa).

Residues 1–194 (MSKDTTTYQG…TYVIEAEGEE (194 aa)) form a CPSase region. Positions 61, 245, and 247 each coordinate L-glutamine. One can recognise a Glutamine amidotransferase type-1 domain in the interval 195-390 (RHTVVAYDLG…VELMDADAQK (196 aa)). The active-site Nucleophile is cysteine 273. L-glutamine is bound by residues phenylalanine 274, glutamine 277, asparagine 315, glycine 317, and phenylalanine 318. Catalysis depends on residues histidine 363 and glutamate 365.

This sequence belongs to the CarA family. In terms of assembly, composed of two chains; the small (or glutamine) chain promotes the hydrolysis of glutamine to ammonia, which is used by the large (or ammonia) chain to synthesize carbamoyl phosphate. Tetramer of heterodimers (alpha,beta)4.

The catalysed reaction is hydrogencarbonate + L-glutamine + 2 ATP + H2O = carbamoyl phosphate + L-glutamate + 2 ADP + phosphate + 2 H(+). It catalyses the reaction L-glutamine + H2O = L-glutamate + NH4(+). It functions in the pathway amino-acid biosynthesis; L-arginine biosynthesis; carbamoyl phosphate from bicarbonate: step 1/1. The protein operates within pyrimidine metabolism; UMP biosynthesis via de novo pathway; (S)-dihydroorotate from bicarbonate: step 1/3. Its function is as follows. Small subunit of the glutamine-dependent carbamoyl phosphate synthetase (CPSase). CPSase catalyzes the formation of carbamoyl phosphate from the ammonia moiety of glutamine, carbonate, and phosphate donated by ATP, constituting the first step of 2 biosynthetic pathways, one leading to arginine and/or urea and the other to pyrimidine nucleotides. The small subunit (glutamine amidotransferase) binds and cleaves glutamine to supply the large subunit with the substrate ammonia. This Corynebacterium glutamicum (strain ATCC 13032 / DSM 20300 / JCM 1318 / BCRC 11384 / CCUG 27702 / LMG 3730 / NBRC 12168 / NCIMB 10025 / NRRL B-2784 / 534) protein is Carbamoyl phosphate synthase small chain.